Here is a 202-residue protein sequence, read N- to C-terminus: Peptide deformylase 2 (202 aa).

Fe cation contacts are provided by Cys-120 and His-162. Glu-163 is an active-site residue. His-166 contributes to the Fe cation binding site.

This sequence belongs to the polypeptide deformylase family. Fe(2+) is required as a cofactor.

It carries out the reaction N-terminal N-formyl-L-methionyl-[peptide] + H2O = N-terminal L-methionyl-[peptide] + formate. Functionally, removes the formyl group from the N-terminal Met of newly synthesized proteins. Requires at least a dipeptide for an efficient rate of reaction. N-terminal L-methionine is a prerequisite for activity but the enzyme has broad specificity at other positions. This is Peptide deformylase 2 from Rickettsia conorii (strain ATCC VR-613 / Malish 7).